A 552-amino-acid polypeptide reads, in one-letter code: Chaperonin GroEL (552 aa).

ATP is bound by residues 30 to 33, lysine 51, 87 to 91, glycine 415, and aspartate 496; these read TLGP and DGTTT.

This sequence belongs to the chaperonin (HSP60) family. As to quaternary structure, forms a cylinder of 14 subunits composed of two heptameric rings stacked back-to-back. Interacts with the co-chaperonin GroES.

It is found in the cytoplasm. The catalysed reaction is ATP + H2O + a folded polypeptide = ADP + phosphate + an unfolded polypeptide.. Functionally, together with its co-chaperonin GroES, plays an essential role in assisting protein folding. The GroEL-GroES system forms a nano-cage that allows encapsulation of the non-native substrate proteins and provides a physical environment optimized to promote and accelerate protein folding. The protein is Chaperonin GroEL of Paramagnetospirillum magneticum (strain ATCC 700264 / AMB-1) (Magnetospirillum magneticum).